A 321-amino-acid polypeptide reads, in one-letter code: Glycerol-3-phosphate dehydrogenase [NAD(P)+] (321 aa).

NADPH is bound by residues serine 10, phenylalanine 11, arginine 31, arginine 32, and lysine 104. Sn-glycerol 3-phosphate is bound by residues lysine 104 and glycine 132. Position 136 (alanine 136) interacts with NADPH. 5 residues coordinate sn-glycerol 3-phosphate: lysine 186, aspartate 238, serine 248, arginine 249, and asparagine 250. Lysine 186 (proton acceptor) is an active-site residue. Arginine 249 contributes to the NADPH binding site. Glutamate 272 contacts NADPH.

The protein belongs to the NAD-dependent glycerol-3-phosphate dehydrogenase family.

It is found in the cytoplasm. The enzyme catalyses sn-glycerol 3-phosphate + NAD(+) = dihydroxyacetone phosphate + NADH + H(+). It carries out the reaction sn-glycerol 3-phosphate + NADP(+) = dihydroxyacetone phosphate + NADPH + H(+). Catalyzes the reduction of the glycolytic intermediate dihydroxyacetone phosphate (DHAP) to sn-glycerol 3-phosphate (G3P). This is Glycerol-3-phosphate dehydrogenase [NAD(P)+] from Methanothermobacter thermautotrophicus (strain ATCC 29096 / DSM 1053 / JCM 10044 / NBRC 100330 / Delta H) (Methanobacterium thermoautotrophicum).